The chain runs to 732 residues: DNA ligase (732 aa).

Residues 47–51 (DAEYD), 96–97 (SI), and glutamate 133 contribute to the NAD(+) site. Catalysis depends on lysine 135, which acts as the N6-AMP-lysine intermediate. Arginine 156, glutamate 196, lysine 317, and lysine 341 together coordinate NAD(+). Zn(2+) contacts are provided by cysteine 470, cysteine 473, cysteine 488, and cysteine 494. A BRCT domain is found at 653–732 (RATLPLAGKT…AGMLALLQGR (80 aa)).

Belongs to the NAD-dependent DNA ligase family. LigA subfamily. Mg(2+) is required as a cofactor. The cofactor is Mn(2+).

The catalysed reaction is NAD(+) + (deoxyribonucleotide)n-3'-hydroxyl + 5'-phospho-(deoxyribonucleotide)m = (deoxyribonucleotide)n+m + AMP + beta-nicotinamide D-nucleotide.. DNA ligase that catalyzes the formation of phosphodiester linkages between 5'-phosphoryl and 3'-hydroxyl groups in double-stranded DNA using NAD as a coenzyme and as the energy source for the reaction. It is essential for DNA replication and repair of damaged DNA. The chain is DNA ligase from Paracidovorax citrulli (strain AAC00-1) (Acidovorax citrulli).